A 130-amino-acid chain; its full sequence is uncharacterized protein (130 aa).

The chain crosses the membrane as a helical span at residues 21 to 43 (VAVCTVAAEVLAIFTLVCTRVFI).

Its subcellular location is the membrane. This is an uncharacterized protein from Saccharomyces cerevisiae (strain ATCC 204508 / S288c) (Baker's yeast).